A 141-amino-acid chain; its full sequence is Cytochrome c-type biogenesis protein CcmE (141 aa).

The Cytoplasmic portion of the chain corresponds to 1–7 (MQRKHKR). The chain crosses the membrane as a helical; Signal-anchor for type II membrane protein span at residues 8-28 (ILFVAVSFIALGCVSAFVLFE). Residues 29 to 141 (LSKSISFFCT…SSDAAVIGSS (113 aa)) lie on the Periplasmic side of the membrane. Heme-binding residues include histidine 121 and tyrosine 125.

This sequence belongs to the CcmE/CycJ family.

The protein resides in the cell inner membrane. In terms of biological role, heme chaperone required for the biogenesis of c-type cytochromes. Transiently binds heme delivered by CcmC and transfers the heme to apo-cytochromes in a process facilitated by CcmF and CcmH. This Anaplasma phagocytophilum (strain HZ) protein is Cytochrome c-type biogenesis protein CcmE.